The primary structure comprises 546 residues: MGNSQEPQDFNISVMPSSLTPVHVAKAAEGLNLYDTASHQVSHFVPLKPGEVGIYVCGATVQSSPHIGHIRAAVAFDIVRRWFLKLGYKVTFVRNVTDIDDKILVKAAAAGQRWWARAYYYEREFTEAYNTLGVLPPTVEPRATGHMSDMIDLIQRILDNGHGYVVTDADGKPTGNVYFDVASWPHYGELTHQKQTSEVDEAAAVADRMGPSVDATGADKYNPVDPADASPDKHDPRDFALWKAPKDTDPEDARWSTPFGVGRPGWHIECSAMSHRYLGDGFDIHGGGLDLRFPHHENEMAQTCAAGYPSAARWMHSAWVTAKGEKMSKSLGTGLSVPSVLAEHSAWVVRYALGSVQYRSMLEWSDQALVEAQAAYDRVSNFIERAGVALGGQPSREEVAAVSADDLPADFVAAMNDDVNVSGATAAIFTAIRSGNTLLSQLADRADSETAKAEVREALLAVRAMLDTLGLDPLAEPWVSAGGAADGTAESPEHAALEALIAEQLNARAEARKAKDFAKADQIRDALTEAGIAIEDGPQGSTWSLK.

Cysteine 57 is a Zn(2+) binding site. Positions 59–69 (ATVQSSPHIGH) match the 'HIGH' region motif. Residues 211-236 (PSVDATGADKYNPVDPADASPDKHDP) are disordered. The Zn(2+) site is built by cysteine 270, histidine 295, and glutamate 299. The 'KMSKS' region signature appears at 326–330 (KMSKS). Lysine 329 provides a ligand contact to ATP.

The protein belongs to the class-I aminoacyl-tRNA synthetase family. Monomer. It depends on Zn(2+) as a cofactor.

The protein localises to the cytoplasm. It catalyses the reaction tRNA(Cys) + L-cysteine + ATP = L-cysteinyl-tRNA(Cys) + AMP + diphosphate. The chain is Cysteine--tRNA ligase from Bifidobacterium longum (strain NCC 2705).